A 516-amino-acid polypeptide reads, in one-letter code: Cytochrome P450 1A2 (516 aa).

Ser69 carries O-linked (GlcNAc) serine glycosylation. Position 226 (Phe226) interacts with substrate. Cys458 serves as a coordination point for heme.

Belongs to the cytochrome P450 family. As to quaternary structure, interacts with PGRMC1; the interaction requires PGRMC1 homodimerization. The cofactor is heme.

Its subcellular location is the endoplasmic reticulum membrane. It localises to the microsome membrane. The enzyme catalyses an organic molecule + reduced [NADPH--hemoprotein reductase] + O2 = an alcohol + oxidized [NADPH--hemoprotein reductase] + H2O + H(+). It carries out the reaction 17beta-estradiol + reduced [NADPH--hemoprotein reductase] + O2 = 2-hydroxy-17beta-estradiol + oxidized [NADPH--hemoprotein reductase] + H2O + H(+). The catalysed reaction is 17beta-estradiol + reduced [NADPH--hemoprotein reductase] + O2 = 4-hydroxy-17beta-estradiol + oxidized [NADPH--hemoprotein reductase] + H2O + H(+). It catalyses the reaction estrone + reduced [NADPH--hemoprotein reductase] + O2 = 2-hydroxyestrone + oxidized [NADPH--hemoprotein reductase] + H2O + H(+). The enzyme catalyses estrone + reduced [NADPH--hemoprotein reductase] + O2 = 4-hydroxyestrone + oxidized [NADPH--hemoprotein reductase] + H2O + H(+). It carries out the reaction cholesterol + reduced [NADPH--hemoprotein reductase] + O2 = 25-hydroxycholesterol + oxidized [NADPH--hemoprotein reductase] + H2O + H(+). The catalysed reaction is all-trans-retinol + reduced [NADPH--hemoprotein reductase] + O2 = all-trans-retinal + oxidized [NADPH--hemoprotein reductase] + 2 H2O + H(+). It catalyses the reaction all-trans-retinal + reduced [NADPH--hemoprotein reductase] + O2 = all-trans-retinoate + oxidized [NADPH--hemoprotein reductase] + H2O + 2 H(+). The enzyme catalyses (5Z,8Z,11Z,14Z)-eicosatetraenoate + reduced [NADPH--hemoprotein reductase] + O2 = (14R,15S)-epoxy-(5Z,8Z,11Z)-eicosatrienoate + oxidized [NADPH--hemoprotein reductase] + H2O + H(+). It carries out the reaction (5Z,8Z,11Z,14Z)-eicosatetraenoate + reduced [NADPH--hemoprotein reductase] + O2 = (14S,15R)-epoxy-(5Z,8Z,11Z)-eicosatrienoate + oxidized [NADPH--hemoprotein reductase] + H2O + H(+). The catalysed reaction is (5Z,8Z,11Z,14Z,17Z)-eicosapentaenoate + reduced [NADPH--hemoprotein reductase] + O2 = (17R,18S)-epoxy-(5Z,8Z,11Z,14Z)-eicosatetraenoate + oxidized [NADPH--hemoprotein reductase] + H2O + H(+). It catalyses the reaction (4Z,7Z,10Z,13Z,16Z,19Z)-docosahexaenoate + reduced [NADPH--hemoprotein reductase] + O2 = (19R,20S)-epoxy-(4Z,7Z,10Z,13Z,16Z)-docosapentaenoate + oxidized [NADPH--hemoprotein reductase] + H2O + H(+). The enzyme catalyses (5S)-hydroperoxy-(6E,8Z,11Z,14Z)-eicosatetraenoate = 5-oxo-(6E,8Z,11Z,14Z)-eicosatetraenoate + H2O. It carries out the reaction (12S)-hydroperoxy-(5Z,8Z,10E,14Z)-eicosatetraenoate = 12-oxo-(5Z,8Z,10E,14Z)-eicosatetraenoate + H2O. The catalysed reaction is (15S)-hydroperoxy-(5Z,8Z,11Z,13E)-eicosatetraenoate = 15-oxo-(5Z,8Z,11Z,13E)-eicosatetraenoate + H2O. It catalyses the reaction (13S)-hydroperoxy-(9Z,11E)-octadecadienoate = 13-oxo-(9Z,11E)-octadecadienoate + H2O. The enzyme catalyses (5Z,8Z,11Z,14Z)-eicosatetraenoate + reduced [NADPH--hemoprotein reductase] + O2 = 13-hydroxy-(5Z,8Z,11Z,14Z)-eicosatetraenoate + oxidized [NADPH--hemoprotein reductase] + H2O + H(+). It carries out the reaction (5Z,8Z,11Z,14Z)-eicosatetraenoate + reduced [NADPH--hemoprotein reductase] + O2 = 19-hydroxy-(5Z,8Z,11Z,14Z)-eicosatetraenoate + oxidized [NADPH--hemoprotein reductase] + H2O + H(+). The catalysed reaction is (9Z,12Z)-octadecadienoate + reduced [NADPH--hemoprotein reductase] + O2 = 11-hydroxy-(9Z,12Z)-octadecadienoate + oxidized [NADPH--hemoprotein reductase] + H2O + H(+). Its pathway is cofactor metabolism; retinol metabolism. It participates in steroid metabolism; cholesterol metabolism. It functions in the pathway lipid metabolism; arachidonate metabolism. Its function is as follows. A cytochrome P450 monooxygenase involved in the metabolism of various endogenous substrates, including fatty acids, steroid hormones and vitamins. Mechanistically, uses molecular oxygen inserting one oxygen atom into a substrate, and reducing the second into a water molecule, with two electrons provided by NADPH via cytochrome P450 reductase (NADPH--hemoprotein reductase). Catalyzes the hydroxylation of carbon-hydrogen bonds. Exhibits high catalytic activity for the formation of hydroxyestrogens from estrone (E1) and 17beta-estradiol (E2), namely 2-hydroxy E1 and E2. Metabolizes cholesterol toward 25-hydroxycholesterol, a physiological regulator of cellular cholesterol homeostasis. May act as a major enzyme for all-trans retinoic acid biosynthesis in the liver. Catalyzes two successive oxidative transformation of all-trans retinol to all-trans retinal and then to the active form all-trans retinoic acid. Primarily catalyzes stereoselective epoxidation of the last double bond of polyunsaturated fatty acids (PUFA), displaying a strong preference for the (R,S) stereoisomer. Catalyzes bisallylic hydroxylation and omega-1 hydroxylation of PUFA. May also participate in eicosanoids metabolism by converting hydroperoxide species into oxo metabolites (lipoxygenase-like reaction, NADPH-independent). Plays a role in the oxidative metabolism of xenobiotics. Catalyzes the N-hydroxylation of heterocyclic amines and the O-deethylation of phenacetin. Metabolizes caffeine via N3-demethylation. This is Cytochrome P450 1A2 (CYP1A2) from Pongo abelii (Sumatran orangutan).